The following is a 437-amino-acid chain: MTKQENDIQKRFFNDNLQTVDVAIFDAINGEFKRQQHEIELIASENIVSRAVLEAQGSILTNKYAEGYPRKRFYGGCRFVDVVEDLAIERAKQLFGAAFANVQAHSGSQMNQAVFLALLQPGDTFMGLDLNSGGHLTHGSSVNMSGKWFDVVSYGVRKEDQILDMEEIERLAKEHKPKLIITGGSAYSRLWDWKRFREIADEIGAYLLVDMSHIAGLVAGGVHPSPVPHAHIVTTTTHKSLRGPRGGLILTNDETLARKINSAIFPGLQGGPLMHVIAAKAVAFEEALQPAFKNYSANVVVNAKTLAKTLQSNGFDIVSGGTDNHLLLVDLCSKKVTGKRAELALGRAHITCNKNAIPFDLQAPSVTSGIRLGSPAATTRGLAENEFVQVGHMISEVLDGLQMAKSDEDNNAVEMAVRKKVEDMTNKFPLYSYLPIC.

(6S)-5,6,7,8-tetrahydrofolate contacts are provided by residues Leu130 and 134-136 (GHL). Lys239 carries the N6-(pyridoxal phosphate)lysine modification.

It belongs to the SHMT family. Homodimer. The cofactor is pyridoxal 5'-phosphate.

Its subcellular location is the cytoplasm. The catalysed reaction is (6R)-5,10-methylene-5,6,7,8-tetrahydrofolate + glycine + H2O = (6S)-5,6,7,8-tetrahydrofolate + L-serine. It participates in one-carbon metabolism; tetrahydrofolate interconversion. The protein operates within amino-acid biosynthesis; glycine biosynthesis; glycine from L-serine: step 1/1. Functionally, catalyzes the reversible interconversion of serine and glycine with tetrahydrofolate (THF) serving as the one-carbon carrier. This reaction serves as the major source of one-carbon groups required for the biosynthesis of purines, thymidylate, methionine, and other important biomolecules. Also exhibits THF-independent aldolase activity toward beta-hydroxyamino acids, producing glycine and aldehydes, via a retro-aldol mechanism. The chain is Serine hydroxymethyltransferase from Bartonella quintana (strain Toulouse) (Rochalimaea quintana).